The primary structure comprises 164 residues: 17.8 kDa class II heat shock protein (164 aa).

The 117-residue stretch at 48-164 folds into the sHSP domain; it reads DARAMAATPA…KPKTIEVKVA (117 aa).

It belongs to the small heat shock protein (HSP20) family.

It is found in the cytoplasm. This chain is 17.8 kDa class II heat shock protein, found in Zea mays (Maize).